We begin with the raw amino-acid sequence, 439 residues long: tRNA modification GTPase MnmE (439 aa).

Positions 23, 80, and 120 each coordinate (6S)-5-formyl-5,6,7,8-tetrahydrofolate. The TrmE-type G domain maps to glycine 217–proline 365. K(+) is bound at residue asparagine 227. Residues asparagine 227–serine 232, threonine 246–threonine 252, and aspartate 271–glycine 274 contribute to the GTP site. Serine 231 contributes to the Mg(2+) binding site. The K(+) site is built by threonine 246, valine 248, and threonine 251. Threonine 252 serves as a coordination point for Mg(2+). Lysine 439 contacts (6S)-5-formyl-5,6,7,8-tetrahydrofolate.

This sequence belongs to the TRAFAC class TrmE-Era-EngA-EngB-Septin-like GTPase superfamily. TrmE GTPase family. As to quaternary structure, homodimer. Heterotetramer of two MnmE and two MnmG subunits. K(+) serves as cofactor.

It localises to the cytoplasm. Its function is as follows. Exhibits a very high intrinsic GTPase hydrolysis rate. Involved in the addition of a carboxymethylaminomethyl (cmnm) group at the wobble position (U34) of certain tRNAs, forming tRNA-cmnm(5)s(2)U34. This Rhizobium meliloti (strain 1021) (Ensifer meliloti) protein is tRNA modification GTPase MnmE.